We begin with the raw amino-acid sequence, 145 residues long: D-aminoacyl-tRNA deacylase (145 aa).

The Gly-cisPro motif, important for rejection of L-amino acids motif lies at 137–138 (GP).

It belongs to the DTD family. Homodimer.

It is found in the cytoplasm. The enzyme catalyses glycyl-tRNA(Ala) + H2O = tRNA(Ala) + glycine + H(+). It carries out the reaction a D-aminoacyl-tRNA + H2O = a tRNA + a D-alpha-amino acid + H(+). In terms of biological role, an aminoacyl-tRNA editing enzyme that deacylates mischarged D-aminoacyl-tRNAs. Also deacylates mischarged glycyl-tRNA(Ala), protecting cells against glycine mischarging by AlaRS. Acts via tRNA-based rather than protein-based catalysis; rejects L-amino acids rather than detecting D-amino acids in the active site. By recycling D-aminoacyl-tRNA to D-amino acids and free tRNA molecules, this enzyme counteracts the toxicity associated with the formation of D-aminoacyl-tRNA entities in vivo and helps enforce protein L-homochirality. This Shewanella putrefaciens (strain CN-32 / ATCC BAA-453) protein is D-aminoacyl-tRNA deacylase.